Here is a 61-residue protein sequence, read N- to C-terminus: Large ribosomal subunit protein uL30 (61 aa).

It belongs to the universal ribosomal protein uL30 family. As to quaternary structure, part of the 50S ribosomal subunit.

The polypeptide is Large ribosomal subunit protein uL30 (Methylococcus capsulatus (strain ATCC 33009 / NCIMB 11132 / Bath)).